Consider the following 389-residue polypeptide: Large ribosomal subunit protein uL3 (389 aa).

Belongs to the universal ribosomal protein uL3 family. Component of the large ribosomal subunit. Mature ribosomes consist of a small (40S) and a large (60S) subunit. The 40S subunit contains about 32 different proteins and 1 molecule of RNA (18S). The 60S subunit contains 45 different proteins and 3 molecules of RNA (25S, 5.8S and 5S).

Its subcellular location is the cytoplasm. In terms of biological role, component of the ribosome, a large ribonucleoprotein complex responsible for the synthesis of proteins in the cell. The small ribosomal subunit (SSU) binds messenger RNAs (mRNAs) and translates the encoded message by selecting cognate aminoacyl-transfer RNA (tRNA) molecules. The large subunit (LSU) contains the ribosomal catalytic site termed the peptidyl transferase center (PTC), which catalyzes the formation of peptide bonds, thereby polymerizing the amino acids delivered by tRNAs into a polypeptide chain. The nascent polypeptides leave the ribosome through a tunnel in the LSU and interact with protein factors that function in enzymatic processing, targeting, and the membrane insertion of nascent chains at the exit of the ribosomal tunnel. RPL3 plays a role in coordinating processes of accommodating the aminoacyl-tRNA in the PTC. The polypeptide is Large ribosomal subunit protein uL3 (Candida albicans (strain SC5314 / ATCC MYA-2876) (Yeast)).